The primary structure comprises 450 residues: Bifunctional protein GlmU (450 aa).

The segment at 1–226 (MLAVAVLAAG…PDEVNGINNR (226 aa)) is pyrophosphorylase. UDP-N-acetyl-alpha-D-glucosamine is bound by residues 7–10 (LAAG), lysine 21, glutamine 73, and 78–79 (GT). Aspartate 103 contributes to the Mg(2+) binding site. Positions 140, 155, 170, and 224 each coordinate UDP-N-acetyl-alpha-D-glucosamine. Asparagine 224 contacts Mg(2+). Residues 227-247 (KQLAQCEGVLQQRLRDYWMDE) are linker. An N-acetyltransferase region spans residues 248–450 (GVTFVDPASC…TKDNWANRSI (203 aa)). UDP-N-acetyl-alpha-D-glucosamine is bound by residues arginine 329 and lysine 347. The Proton acceptor role is filled by histidine 359. UDP-N-acetyl-alpha-D-glucosamine is bound by residues tyrosine 362 and asparagine 373. Acetyl-CoA is bound by residues alanine 376, 382–383 (NY), alanine 419, and arginine 436.

It in the N-terminal section; belongs to the N-acetylglucosamine-1-phosphate uridyltransferase family. This sequence in the C-terminal section; belongs to the transferase hexapeptide repeat family. In terms of assembly, homotrimer. Requires Mg(2+) as cofactor.

The protein resides in the cytoplasm. It catalyses the reaction alpha-D-glucosamine 1-phosphate + acetyl-CoA = N-acetyl-alpha-D-glucosamine 1-phosphate + CoA + H(+). It carries out the reaction N-acetyl-alpha-D-glucosamine 1-phosphate + UTP + H(+) = UDP-N-acetyl-alpha-D-glucosamine + diphosphate. It functions in the pathway nucleotide-sugar biosynthesis; UDP-N-acetyl-alpha-D-glucosamine biosynthesis; N-acetyl-alpha-D-glucosamine 1-phosphate from alpha-D-glucosamine 6-phosphate (route II): step 2/2. It participates in nucleotide-sugar biosynthesis; UDP-N-acetyl-alpha-D-glucosamine biosynthesis; UDP-N-acetyl-alpha-D-glucosamine from N-acetyl-alpha-D-glucosamine 1-phosphate: step 1/1. The protein operates within bacterial outer membrane biogenesis; LPS lipid A biosynthesis. Catalyzes the last two sequential reactions in the de novo biosynthetic pathway for UDP-N-acetylglucosamine (UDP-GlcNAc). The C-terminal domain catalyzes the transfer of acetyl group from acetyl coenzyme A to glucosamine-1-phosphate (GlcN-1-P) to produce N-acetylglucosamine-1-phosphate (GlcNAc-1-P), which is converted into UDP-GlcNAc by the transfer of uridine 5-monophosphate (from uridine 5-triphosphate), a reaction catalyzed by the N-terminal domain. The protein is Bifunctional protein GlmU of Synechococcus sp. (strain CC9902).